Here is a 154-residue protein sequence, read N- to C-terminus: Peptide methionine sulfoxide reductase MsrB (154 aa).

The 123-residue stretch at 28–150 (DQQWREQLSE…NSVSLIFNKI (123 aa)) folds into the MsrB domain. Zn(2+) is bound by residues Cys-67, Cys-70, Cys-116, and Cys-119. Cys-139 functions as the Nucleophile in the catalytic mechanism.

The protein belongs to the MsrB Met sulfoxide reductase family. Zn(2+) is required as a cofactor.

The catalysed reaction is L-methionyl-[protein] + [thioredoxin]-disulfide + H2O = L-methionyl-(R)-S-oxide-[protein] + [thioredoxin]-dithiol. The polypeptide is Peptide methionine sulfoxide reductase MsrB (Vibrio vulnificus (strain CMCP6)).